We begin with the raw amino-acid sequence, 326 residues long: Polyprenal reductase (326 aa).

5 helical membrane-spanning segments follow: residues Met26–Glu46, His84–Val104, Ile167–Leu187, Ile212–Leu232, and Leu256–Ala276.

The protein belongs to the steroid 5-alpha reductase family. Polyprenal reductase subfamily.

The protein resides in the endoplasmic reticulum membrane. The catalysed reaction is a di-trans,poly-cis-dolichal + NADP(+) = a di-trans,poly-cis-polyprenal + NADPH + H(+). It functions in the pathway protein modification; protein glycosylation. Functionally, plays a key role in early steps of protein N-linked glycosylation by being involved in the conversion of polyprenol into dolichol. Acts as a polyprenal reductase that mediates the reduction of polyprenal into dolichal in a NADP-dependent mechanism. Dolichols are required for the synthesis of dolichol-linked monosaccharides and the oligosaccharide precursor used for N-glycosylation. In Drosophila melanogaster (Fruit fly), this protein is Polyprenal reductase.